Here is a 267-residue protein sequence, read N- to C-terminus: Mitochondrial S-adenosylmethionine carrier protein (267 aa).

3 Solcar repeats span residues 4–77 (REFT…TKSV), 86–168 (LAPI…LKAV), and 177–265 (LDSW…VRRT). 6 consecutive transmembrane segments (helical) span residues 5–25 (EFTA…LTLF), 49–69 (IYAG…AFFV), 85–105 (NLAP…ACLI), 142–162 (RGYG…FPLW), 182–202 (AAVC…PLDV), and 238–258 (FAGS…FLGA).

This sequence belongs to the mitochondrial carrier (TC 2.A.29) family.

The protein resides in the mitochondrion inner membrane. It catalyses the reaction S-adenosyl-L-homocysteine(out) + S-adenosyl-L-methionine(in) = S-adenosyl-L-homocysteine(in) + S-adenosyl-L-methionine(out). Its function is as follows. Mitochondrial S-adenosyl-L-methionine/S-adenosyl-L-homocysteine antiporter. Mediates the exchange of cytosolic S-adenosyl-L-methionine, the predominant methyl-group donor for macromolecule methylation processes, for mitochondrial S-adenosylhomocysteine(SAH), a by-product of methylation reactions. This Danio rerio (Zebrafish) protein is Mitochondrial S-adenosylmethionine carrier protein (slc25a26).